A 27-amino-acid polypeptide reads, in one-letter code: Conotoxin flf14a (27 aa).

Intrachain disulfides connect cysteine 6–cysteine 26 and cysteine 10–cysteine 22.

In terms of tissue distribution, expressed by the venom duct.

It localises to the secreted. The chain is Conotoxin flf14a from Conus anabathrum floridanus (Florida cone).